The primary structure comprises 195 residues: PE-PGRS family protein PE_PGRS61 (195 aa).

Belongs to the mycobacterial PE family. PGRS subfamily. In terms of assembly, interacts with human TLR2.

The protein localises to the secreted. Its subcellular location is the cell wall. It localises to the cell surface. Its activity is regulated as follows. Binding of Ca(2+) to PE_PGRS61 induces conformational changes and increases affinity for TLR2. Mediates Ca(2+)-dependent up-regulation of the anti-inflammatory cytokine IL-10. The chain is PE-PGRS family protein PE_PGRS61 from Mycobacterium tuberculosis (strain ATCC 25618 / H37Rv).